Here is a 334-residue protein sequence, read N- to C-terminus: Ornithine carbamoyltransferase (334 aa).

Carbamoyl phosphate-binding positions include 57 to 60, Gln-84, Arg-108, and 135 to 138; these read STRT and HPTQ. L-ornithine is bound by residues Asn-169, Asp-233, and 237–238; that span reads SM. Residues 275-276 and Arg-320 contribute to the carbamoyl phosphate site; that span reads CL.

It belongs to the aspartate/ornithine carbamoyltransferase superfamily. OTCase family. Homotrimer.

The protein localises to the cytoplasm. The catalysed reaction is carbamoyl phosphate + L-ornithine = L-citrulline + phosphate + H(+). It participates in amino-acid biosynthesis; L-arginine biosynthesis; L-arginine from L-ornithine and carbamoyl phosphate: step 1/3. Functionally, reversibly catalyzes the transfer of the carbamoyl group from carbamoyl phosphate (CP) to the N(epsilon) atom of ornithine (ORN) to produce L-citrulline. The polypeptide is Ornithine carbamoyltransferase (Vibrio vulnificus (strain CMCP6)).